The sequence spans 757 residues: Polyribonucleotide nucleotidyltransferase (757 aa).

Residues Asp525 and Asp531 each coordinate Mg(2+). The 60-residue stretch at 591-650 (PRVISVNIPVDKIGELIGPKGKTINAIQDETGADISIEEDGTVYIGAVDGPSADAARAQV) folds into the KH domain. An S1 motif domain is found at 662-734 (GESFLGTVVK…DRGKLSLAPV (73 aa)). Positions 737 to 757 (ETADQEGRDAASHGSEAPAEG) are disordered.

It belongs to the polyribonucleotide nucleotidyltransferase family. Mg(2+) is required as a cofactor.

It localises to the cytoplasm. The catalysed reaction is RNA(n+1) + phosphate = RNA(n) + a ribonucleoside 5'-diphosphate. Functionally, involved in mRNA degradation. Catalyzes the phosphorolysis of single-stranded polyribonucleotides processively in the 3'- to 5'-direction. The protein is Polyribonucleotide nucleotidyltransferase of Clavibacter michiganensis subsp. michiganensis (strain NCPPB 382).